We begin with the raw amino-acid sequence, 377 residues long: Flap endonuclease 1 (377 aa).

The segment at 1-104 (MGIQGLAKLL…GELAKRTERR (104 aa)) is N-domain. D34 provides a ligand contact to Mg(2+). The DNA site is built by R47 and R70. Mg(2+)-binding residues include D86, E158, E160, D179, and D181. Residues 122–253 (NIDKFSRRLV…KRSVDLIRQH (132 aa)) form an I-domain region. E158 contacts DNA. DNA contacts are provided by G231 and D233. D233 serves as a coordination point for Mg(2+). The interaction with PCNA stretch occupies residues 336-344 (TQGRLDSFF). Positions 337–377 (QGRLDSFFKVLPSPANKRKLQDGKGSQNKKAKTGGKFKRPK) are disordered. Residues 363–377 (QNKKAKTGGKFKRPK) show a composition bias toward basic residues.

This sequence belongs to the XPG/RAD2 endonuclease family. FEN1 subfamily. In terms of assembly, interacts with PCNA. Three molecules of FEN1 bind to one PCNA trimer with each molecule binding to one PCNA monomer. PCNA stimulates the nuclease activity without altering cleavage specificity. Mg(2+) is required as a cofactor. Post-translationally, phosphorylated. Phosphorylation upon DNA damage induces relocalization to the nuclear plasma.

It is found in the nucleus. Its subcellular location is the nucleolus. The protein localises to the nucleoplasm. It localises to the mitochondrion. In terms of biological role, structure-specific nuclease with 5'-flap endonuclease and 5'-3' exonuclease activities involved in DNA replication and repair. During DNA replication, cleaves the 5'-overhanging flap structure that is generated by displacement synthesis when DNA polymerase encounters the 5'-end of a downstream Okazaki fragment. It enters the flap from the 5'-end and then tracks to cleave the flap base, leaving a nick for ligation. Also involved in the long patch base excision repair (LP-BER) pathway, by cleaving within the apurinic/apyrimidinic (AP) site-terminated flap. Acts as a genome stabilization factor that prevents flaps from equilibrating into structures that lead to duplications and deletions. Also possesses 5'-3' exonuclease activity on nicked or gapped double-stranded DNA, and exhibits RNase H activity. Also involved in replication and repair of rDNA and in repairing mitochondrial DNA. The protein is Flap endonuclease 1 of Nematostella vectensis (Starlet sea anemone).